The primary structure comprises 591 residues: Myelin expression factor 2 (591 aa).

The tract at residues 1–92 (MADADKSEAA…GEKKGPNRNR (92 aa)) is disordered. Over residues 22–36 (EPRRDTHPGEPEKPP) the composition is skewed to basic and acidic residues. Residue K44 forms a Glycyl lysine isopeptide (Lys-Gly) (interchain with G-Cter in SUMO2) linkage. 2 stretches are compositionally biased toward basic and acidic residues: residues 45-63 (MENDESVKEEKSDLKEKST) and 74-87 (YSKDKNSGTGEKKG). 2 RRM domains span residues 91–169 (NRVF…EDPD) and 224–301 (STIF…MDDK). An omega-N-methylarginine mark is found at R397 and R417. Phosphoserine is present on S422. Residues 514-590 (NQIFVRNLPF…REIDVRLDRN (77 aa)) enclose the RRM 3 domain.

In terms of assembly, monomer. As to expression, highly expressed in the brain.

Its subcellular location is the nucleus. Its function is as follows. Transcriptional repressor of the myelin basic protein gene (MBP). Binds to the proximal MB1 element 5'-TTGTCC-3' of the MBP promoter. Its binding to MB1 and function are inhibited by PURA. This chain is Myelin expression factor 2 (Myef2), found in Mus musculus (Mouse).